The primary structure comprises 426 residues: Serine/threonine-protein kinase ssn3 (426 aa).

The region spanning Tyr-41–Phe-368 is the Protein kinase domain. ATP-binding positions include Ile-47–Val-55 and Lys-71. Catalysis depends on Asp-173, which acts as the Proton acceptor. A disordered region spans residues Arg-390 to Glu-426.

Belongs to the protein kinase superfamily. CMGC Ser/Thr protein kinase family. CDC2/CDKX subfamily. Component of the srb8-11 complex, a regulatory module of the Mediator complex. Mg(2+) is required as a cofactor.

The protein resides in the nucleus. It carries out the reaction L-seryl-[protein] + ATP = O-phospho-L-seryl-[protein] + ADP + H(+). The catalysed reaction is L-threonyl-[protein] + ATP = O-phospho-L-threonyl-[protein] + ADP + H(+). It catalyses the reaction [DNA-directed RNA polymerase] + ATP = phospho-[DNA-directed RNA polymerase] + ADP + H(+). Component of the srb8-11 complex. The srb8-11 complex is a regulatory module of the Mediator complex which is itself dependent transcription. The srb8-11 complex may be involved in the transcriptional repression of a subset of genes regulated by Mediator. It may inhibit the association of the Mediator complex with RNA polymerase II to form the holoenzyme complex. The srb8-11 complex phosphorylates the C-terminal domain (CTD) of the largest subunit of RNA polymerase II. The chain is Serine/threonine-protein kinase ssn3 (ssn3) from Neosartorya fischeri (strain ATCC 1020 / DSM 3700 / CBS 544.65 / FGSC A1164 / JCM 1740 / NRRL 181 / WB 181) (Aspergillus fischerianus).